The chain runs to 344 residues: Uroporphyrinogen decarboxylase (344 aa).

Substrate contacts are provided by residues 25–29, Asp-75, Tyr-152, Ser-207, and His-323; that span reads RQAGR.

Belongs to the uroporphyrinogen decarboxylase family. Homodimer.

The protein resides in the cytoplasm. The catalysed reaction is uroporphyrinogen III + 4 H(+) = coproporphyrinogen III + 4 CO2. It functions in the pathway porphyrin-containing compound metabolism; protoporphyrin-IX biosynthesis; coproporphyrinogen-III from 5-aminolevulinate: step 4/4. Functionally, catalyzes the decarboxylation of four acetate groups of uroporphyrinogen-III to yield coproporphyrinogen-III. The sequence is that of Uroporphyrinogen decarboxylase from Ruegeria pomeroyi (strain ATCC 700808 / DSM 15171 / DSS-3) (Silicibacter pomeroyi).